Here is a 390-residue protein sequence, read N- to C-terminus: 8-amino-7-oxononanoate synthase (390 aa).

Position 22 (arginine 22) interacts with substrate. Glycine 109–tyrosine 110 is a binding site for pyridoxal 5'-phosphate. Position 134 (histidine 134) interacts with substrate. Residues serine 180, histidine 208, and threonine 236 each contribute to the pyridoxal 5'-phosphate site. Lysine 239 is subject to N6-(pyridoxal phosphate)lysine. A substrate-binding site is contributed by threonine 353.

This sequence belongs to the class-II pyridoxal-phosphate-dependent aminotransferase family. BioF subfamily. In terms of assembly, homodimer. Pyridoxal 5'-phosphate serves as cofactor.

It catalyses the reaction 6-carboxyhexanoyl-[ACP] + L-alanine + H(+) = (8S)-8-amino-7-oxononanoate + holo-[ACP] + CO2. It functions in the pathway cofactor biosynthesis; biotin biosynthesis. Functionally, catalyzes the decarboxylative condensation of pimeloyl-[acyl-carrier protein] and L-alanine to produce 8-amino-7-oxononanoate (AON), [acyl-carrier protein], and carbon dioxide. This is 8-amino-7-oxononanoate synthase from Azoarcus sp. (strain BH72).